Here is a 435-residue protein sequence, read N- to C-terminus: MSKFDLTAKNCQYLDRHLTFPLLEFLLQKNIYDQTSLLKFILETVSKTNMVDYTMDIRERLNMGNELPEELTKRRSNVLVKLKELQTEVAPLMKCMEELKNPDTMKDSKSIVHALQQEFDFKYDIIRSAQKLAKYLYECGNYRDSISYLYICLLVMEPTDKNYLNVLWGKLAAEILTLNWPTALEDLTRLRDFIDNHNFSPIEVLQQRTWLIHWSVLVFFNHAKGRDLIIEMFLYKQLYLNAIQTMCPHILRYLATAVIINRGRRNALKDLIKIIQQESYTYKDPITEFLECLYVNFDFEGARMKLHECQTVIINDFFIIGCLQEFIENARLMIFETFCRIHQCITIGMLADKLNMEPDEAECWIVNLIRNARLDAKIDSKLGHVVMGTQPLSPYQQLVEKIDSLSVRSEALTVLVERKQKAKTQESGEGNWKYY.

The PCI domain maps to 219 to 392 (FFNHAKGRDL…GHVVMGTQPL (174 aa)).

This sequence belongs to the eIF-3 subunit E family. As to quaternary structure, component of the eukaryotic translation initiation factor 3 (eIF-3) complex.

Its subcellular location is the cytoplasm. Component of the eukaryotic translation initiation factor 3 (eIF-3) complex, which is involved in protein synthesis of a specialized repertoire of mRNAs and, together with other initiation factors, stimulates binding of mRNA and methionyl-tRNAi to the 40S ribosome. The eIF-3 complex specifically targets and initiates translation of a subset of mRNAs involved in cell proliferation. This is Eukaryotic translation initiation factor 3 subunit E (eIF3-S6) from Culex quinquefasciatus (Southern house mosquito).